The following is a 364-amino-acid chain: MKKDYYEILGLSKGASKDEIKKAYRKIAIKYHPDRNQGNEEAASIFKEATQAYEILIDDNKKAKYDRFGHSAFEGGGFEGFSGGFSGFSDIFEDFGDIFDSFFTGNKGQERNRKHAKGEDLGYNIEISLENAYFGYKNNINITRQMLCDSCLGKKSEKGTSPSICNMCNGSGRVVQGGGFFRVTTTCSKCYGEGKIISNPCKSCKGKGSLTKQETIQLNIPPGIDNNQQIKMKGKGNVNPDNQEYGDLYVKILIRSHKVFKRNGKDLYAMLPISFTQAALGKEVKIKTIASKEIKIHIPKGINNEEQILIKNAGMPILQTEKFGNLILITKIKTPKNLNSNAIKLFENLGKELKDGDEIDLLKA.

In terms of domain architecture, J spans 4 to 69 (DYYEILGLSK…NKKAKYDRFG (66 aa)). Residues 135–213 (GYKNNINITR…CKGKGSLTKQ (79 aa)) form a CR-type zinc finger. Residues C148, C151, C165, C168, C187, C190, C201, and C204 each coordinate Zn(2+). CXXCXGXG motif repeat units lie at residues 148–155 (CDSCLGKK), 165–172 (CNMCNGSG), 187–194 (CSKCYGEG), and 201–208 (CKSCKGKG).

This sequence belongs to the DnaJ family. Homodimer. Zn(2+) is required as a cofactor.

The protein resides in the cytoplasm. In terms of biological role, participates actively in the response to hyperosmotic and heat shock by preventing the aggregation of stress-denatured proteins and by disaggregating proteins, also in an autonomous, DnaK-independent fashion. Unfolded proteins bind initially to DnaJ; upon interaction with the DnaJ-bound protein, DnaK hydrolyzes its bound ATP, resulting in the formation of a stable complex. GrpE releases ADP from DnaK; ATP binding to DnaK triggers the release of the substrate protein, thus completing the reaction cycle. Several rounds of ATP-dependent interactions between DnaJ, DnaK and GrpE are required for fully efficient folding. Also involved, together with DnaK and GrpE, in the DNA replication of plasmids through activation of initiation proteins. The chain is Chaperone protein DnaJ from Borreliella burgdorferi (strain ATCC 35210 / DSM 4680 / CIP 102532 / B31) (Borrelia burgdorferi).